Consider the following 235-residue polypeptide: Isopentenyl-diphosphate Delta-isomerase I (235 aa).

K38 provides a ligand contact to substrate. 2 residues coordinate Mg(2+): H42 and H54. Positions L52–L204 constitute a Nudix hydrolase domain. Residues R73 and K77 each coordinate substrate. C89 is an active-site residue. Position 90 (S90) interacts with substrate. Mg(2+)-binding residues include E149 and E151. E151 is a catalytic residue.

It belongs to the IPP isomerase type 1 family. Mg(2+) is required as a cofactor.

It carries out the reaction isopentenyl diphosphate = dimethylallyl diphosphate. Its pathway is isoprenoid biosynthesis; dimethylallyl diphosphate biosynthesis; dimethylallyl diphosphate from isopentenyl diphosphate: step 1/1. It functions in the pathway porphyrin-containing compound metabolism; chlorophyll biosynthesis. Functionally, catalyzes the 1,3-allylic rearrangement of the homoallylic substrate isopentenyl (IPP) to its highly electrophilic allylic isomer, dimethylallyl diphosphate (DMAPP). The polypeptide is Isopentenyl-diphosphate Delta-isomerase I (IPI1) (Camptotheca acuminata (Happy tree)).